The chain runs to 167 residues: Crossover junction endodeoxyribonuclease RuvC (167 aa).

Active-site residues include aspartate 7, glutamate 67, and aspartate 140. Mg(2+) is bound by residues aspartate 7, glutamate 67, and aspartate 140.

This sequence belongs to the RuvC family. Homodimer which binds Holliday junction (HJ) DNA. The HJ becomes 2-fold symmetrical on binding to RuvC with unstacked arms; it has a different conformation from HJ DNA in complex with RuvA. In the full resolvosome a probable DNA-RuvA(4)-RuvB(12)-RuvC(2) complex forms which resolves the HJ. Requires Mg(2+) as cofactor.

The protein resides in the cytoplasm. The catalysed reaction is Endonucleolytic cleavage at a junction such as a reciprocal single-stranded crossover between two homologous DNA duplexes (Holliday junction).. The RuvA-RuvB-RuvC complex processes Holliday junction (HJ) DNA during genetic recombination and DNA repair. Endonuclease that resolves HJ intermediates. Cleaves cruciform DNA by making single-stranded nicks across the HJ at symmetrical positions within the homologous arms, yielding a 5'-phosphate and a 3'-hydroxyl group; requires a central core of homology in the junction. The consensus cleavage sequence is 5'-(A/T)TT(C/G)-3'. Cleavage occurs on the 3'-side of the TT dinucleotide at the point of strand exchange. HJ branch migration catalyzed by RuvA-RuvB allows RuvC to scan DNA until it finds its consensus sequence, where it cleaves and resolves the cruciform DNA. This is Crossover junction endodeoxyribonuclease RuvC from Dehalococcoides mccartyi (strain ATCC BAA-2100 / JCM 16839 / KCTC 5957 / BAV1).